Here is a 96-residue protein sequence, read N- to C-terminus: Large ribosomal subunit protein bL21 (96 aa).

It belongs to the bacterial ribosomal protein bL21 family. In terms of assembly, part of the 50S ribosomal subunit. Contacts protein L20.

Functionally, this protein binds to 23S rRNA in the presence of protein L20. This chain is Large ribosomal subunit protein bL21, found in Sulfurihydrogenibium sp. (strain YO3AOP1).